Here is a 353-residue protein sequence, read N- to C-terminus: UDP-N-acetylglucosamine--N-acetylmuramyl-(pentapeptide) pyrophosphoryl-undecaprenol N-acetylglucosamine transferase (353 aa).

UDP-N-acetyl-alpha-D-glucosamine contacts are provided by residues 10–12, Asn-124, Ser-183, and Gln-283; that span reads TGG.

The protein belongs to the glycosyltransferase 28 family. MurG subfamily.

It is found in the cell inner membrane. It carries out the reaction di-trans,octa-cis-undecaprenyl diphospho-N-acetyl-alpha-D-muramoyl-L-alanyl-D-glutamyl-meso-2,6-diaminopimeloyl-D-alanyl-D-alanine + UDP-N-acetyl-alpha-D-glucosamine = di-trans,octa-cis-undecaprenyl diphospho-[N-acetyl-alpha-D-glucosaminyl-(1-&gt;4)]-N-acetyl-alpha-D-muramoyl-L-alanyl-D-glutamyl-meso-2,6-diaminopimeloyl-D-alanyl-D-alanine + UDP + H(+). It functions in the pathway cell wall biogenesis; peptidoglycan biosynthesis. Its function is as follows. Cell wall formation. Catalyzes the transfer of a GlcNAc subunit on undecaprenyl-pyrophosphoryl-MurNAc-pentapeptide (lipid intermediate I) to form undecaprenyl-pyrophosphoryl-MurNAc-(pentapeptide)GlcNAc (lipid intermediate II). In Helicobacter pylori (strain J99 / ATCC 700824) (Campylobacter pylori J99), this protein is UDP-N-acetylglucosamine--N-acetylmuramyl-(pentapeptide) pyrophosphoryl-undecaprenol N-acetylglucosamine transferase.